The primary structure comprises 327 residues: Olfactory receptor 6A2 (327 aa).

At 1-26 (MEWRNHSGRVSEFVLLGFPAPAPLQV) the chain is on the extracellular side. Asparagine 5 carries N-linked (GlcNAc...) asparagine glycosylation. Residues 27–47 (LLFALLLLAYVLVLTENTLII) form a helical membrane-spanning segment. Over 48-55 (MAIRNHST) the chain is Cytoplasmic. The chain crosses the membrane as a helical span at residues 56–76 (LHKPMYFFLANMSFLEIWYVT). Over 77-104 (VTIPKMLAGFVGSKQDHGQLISFEGCMT) the chain is Extracellular. Cysteine 102 and cysteine 194 are disulfide-bonded. Residues 105-125 (QLYFFLGLGCTECVLLAVMAY) form a helical membrane-spanning segment. The Cytoplasmic segment spans residues 126–144 (DRYMAICYPLHYPVIVSGR). A helical membrane pass occupies residues 145–165 (LCVQMAAGSWAGGFGISMVKV). The Extracellular portion of the chain corresponds to 166–201 (FLISGLSYCGPNIINHFFCDVSPLLNLSCTDMSTAE). The N-linked (GlcNAc...) asparagine glycan is linked to asparagine 191. The helical transmembrane segment at 202-222 (LTDFILAIFILLGPLSVTGAS) threads the bilayer. The Cytoplasmic portion of the chain corresponds to 223–242 (YVAITGAVMHIPSAAGRYKA). Residues 243 to 263 (FSTCASHLTVVIIFYAASIFI) form a helical membrane-spanning segment. The Extracellular portion of the chain corresponds to 264 to 276 (YARPKALSAFDTN). Residues 277–297 (KLVSVLYAVIVPLLNPIIYCL) form a helical membrane-spanning segment. Topologically, residues 298–327 (RNQEVKRALCCTLHLYQHQDPDPKKASRNV) are cytoplasmic.

Belongs to the G-protein coupled receptor 1 family.

Its subcellular location is the cell membrane. Odorant receptor. In Homo sapiens (Human), this protein is Olfactory receptor 6A2 (OR6A2).